A 245-amino-acid chain; its full sequence is MLKTRQCLLGVRTFHGVTSRIWSFFLYILRKHIRTIIQYQTVRYDILSLSPISRNRLNNVKRKILVLDLDETLIHSHHDGVLRPTVRPGTPPDFILKVVIDKHPVRFFVHKRPHVDFFLEVVSQWYELVVFTASMEIYGSAVADKLDNNKAILKRRYYRQHCTLDSGSYIKDLSVVHDDLSSVVILDNSPGAYRSHPDNAIPIKSWFSDPSDTALLNLLPMLDALRFPADVRSVLSRNLHQHRLW.

Residues 7 to 29 (CLLGVRTFHGVTSRIWSFFLYIL) form a helical membrane-spanning segment. The FCP1 homology domain maps to 58-225 (NNVKRKILVL…LNLLPMLDAL (168 aa)).

It belongs to the dullard family.

It is found in the endoplasmic reticulum membrane. The protein localises to the nucleus membrane. It carries out the reaction O-phospho-L-seryl-[protein] + H2O = L-seryl-[protein] + phosphate. The catalysed reaction is O-phospho-L-threonyl-[protein] + H2O = L-threonyl-[protein] + phosphate. Functionally, serine/threonine protein phosphatase that may dephosphorylate and activate lipins. Lipins are phosphatidate phosphatases that catalyze the conversion of phosphatidic acid to diacylglycerol and control the metabolism of fatty acids at different levels. May indirectly modulate the lipid composition of nuclear and/or endoplasmic reticulum membranes and be required for proper nuclear membrane morphology and/or dynamics. May also indirectly regulate the production of lipid droplets and triacylglycerol. May antagonize BMP signaling. The sequence is that of CTD nuclear envelope phosphatase 1B (ctdnep1b) from Danio rerio (Zebrafish).